Consider the following 279-residue polypeptide: uncharacterized protein (279 aa).

The protein belongs to the peptidase C59 family.

This is an uncharacterized protein from Chlorella (PBCV-1).